Consider the following 266-residue polypeptide: Putative carbamate hydrolase RutD (266 aa).

Positions 15–128 constitute an AB hydrolase-1 domain; sequence AVLLSSGLGG…NAHSARCFDA (114 aa).

Belongs to the AB hydrolase superfamily. Hydrolase RutD family.

It carries out the reaction carbamate + 2 H(+) = NH4(+) + CO2. Its function is as follows. Involved in pyrimidine catabolism. May facilitate the hydrolysis of carbamate, a reaction that can also occur spontaneously. The chain is Putative carbamate hydrolase RutD from Variovorax paradoxus (strain S110).